The primary structure comprises 201 residues: dITP/XTP pyrophosphatase (201 aa).

8 to 13 (TNNENK) serves as a coordination point for substrate. Mg(2+) contacts are provided by Glu-41 and Asp-73. The active-site Proton acceptor is Asp-73. Substrate contacts are provided by residues Ser-74, 154–157 (FGYD), Lys-177, and 182–183 (HR).

It belongs to the HAM1 NTPase family. Homodimer. Mg(2+) serves as cofactor.

The enzyme catalyses XTP + H2O = XMP + diphosphate + H(+). It catalyses the reaction dITP + H2O = dIMP + diphosphate + H(+). It carries out the reaction ITP + H2O = IMP + diphosphate + H(+). Its function is as follows. Pyrophosphatase that catalyzes the hydrolysis of nucleoside triphosphates to their monophosphate derivatives, with a high preference for the non-canonical purine nucleotides XTP (xanthosine triphosphate), dITP (deoxyinosine triphosphate) and ITP. Seems to function as a house-cleaning enzyme that removes non-canonical purine nucleotides from the nucleotide pool, thus preventing their incorporation into DNA/RNA and avoiding chromosomal lesions. The sequence is that of dITP/XTP pyrophosphatase from Clostridium tetani (strain Massachusetts / E88).